Here is a 1077-residue protein sequence, read N- to C-terminus: Hemoglobin and hemoglobin-haptoglobin-binding protein A (1077 aa).

A signal peptide spans 1–24 (MTNFRLNVLAYSVMLGLTASVAYA). Positions 25–72 (EPTNQPTNQPTNQPTNQPTNQPTNQPTNQPTNQPTNQPTNQPTNQNSN) are disordered. Tandem repeats lie at residues 26–29 (PTNQ), 30–33 (PTNQ), 34–37 (PTNQ), 38–41 (PTNQ), 42–45 (PTNQ), 46–49 (PTNQ), 50–53 (PTNQ), 54–57 (PTNQ), 58–61 (PTNQ), 62–65 (PTNQ), and 66–69 (PTNQ). An 11 X 4 AA tandem repeats of P-T-N-Q region spans residues 26 to 69 (PTNQPTNQPTNQPTNQPTNQPTNQPTNQPTNQPTNQPTNQPTNQ). Positions 26–70 (PTNQPTNQPTNQPTNQPTNQPTNQPTNQPTNQPTNQPTNQPTNQN) are enriched in low complexity. The short motif at 78-85 (EQINVSGS) is the TonB box element. The region spanning 89-216 (TDTKAPPKIA…LGGSVSLDTK (128 aa)) is the TBDR plug domain. The 854-residue stretch at 224-1077 (NKNYYASYKR…NYRMSVQFEF (854 aa)) folds into the TBDR beta-barrel domain. The short motif at 1060–1077 (NRFYAPERNYRMSVQFEF) is the TonB C-terminal box element.

Belongs to the TonB-dependent receptor family. Hemoglobin/haptoglobin binding protein subfamily.

The protein localises to the cell outer membrane. Its function is as follows. Acts as a receptor for hemoglobin or the hemoglobin/haptoglobin complex of the human host and is required for heme uptake. The protein is Hemoglobin and hemoglobin-haptoglobin-binding protein A (hgpA) of Haemophilus influenzae.